The sequence spans 428 residues: Mitochondrial distribution and morphology protein 12 (428 aa).

In terms of domain architecture, SMP-LTD spans 1–387 (MSFDINWNQL…WPSWICIDMN (387 aa)). Disordered regions lie at residues 75–168 (VMNE…APPL) and 387–428 (NDDD…EAGE). Residues 81 to 96 (NDSKDEHLKNHGDGIN) show a composition bias toward basic and acidic residues. A compositionally biased stretch (acidic residues) spans 106 to 133 (LDDEDEDDEDDDEDDEDEEEEDEDDYDD). The span at 146–161 (LNFNENSTTPSANSFA) shows a compositional bias: polar residues. Positions 387–403 (NDDDDEEEEEEESEDND) are enriched in acidic residues. The segment covering 412–428 (NDGKHGDGRTDETEAGE) has biased composition (basic and acidic residues).

The protein belongs to the MDM12 family. In terms of assembly, component of the ER-mitochondria encounter structure (ERMES) or MDM complex, composed of MMM1, MDM10, MDM12 and MDM34. An MMM1 homodimer associates with one molecule of MDM12 on each side in a pairwise head-to-tail manner, and the SMP-LTD domains of MMM1 and MDM12 generate a continuous hydrophobic tunnel for phospholipid trafficking.

The protein resides in the mitochondrion outer membrane. It is found in the endoplasmic reticulum membrane. Its function is as follows. Component of the ERMES/MDM complex, which serves as a molecular tether to connect the endoplasmic reticulum (ER) and mitochondria. Components of this complex are involved in the control of mitochondrial shape and protein biogenesis, and function in nonvesicular lipid trafficking between the ER and mitochondria. MDM12 is required for the interaction of the ER-resident membrane protein MMM1 and the outer mitochondrial membrane-resident beta-barrel protein MDM10. The MDM12-MMM1 subcomplex functions in the major beta-barrel assembly pathway that is responsible for biogenesis of all mitochondrial outer membrane beta-barrel proteins, and acts in a late step after the SAM complex. The MDM10-MDM12-MMM1 subcomplex further acts in the TOM40-specific pathway after the action of the MDM12-MMM1 complex. Essential for establishing and maintaining the structure of mitochondria and maintenance of mtDNA nucleoids. In Candida albicans (strain SC5314 / ATCC MYA-2876) (Yeast), this protein is Mitochondrial distribution and morphology protein 12.